Consider the following 216-residue polypeptide: Ribosomal RNA small subunit methyltransferase G (216 aa).

S-adenosyl-L-methionine is bound by residues glycine 81, leucine 86, 132-133, and arginine 147; that span reads VE.

It belongs to the methyltransferase superfamily. RNA methyltransferase RsmG family.

It is found in the cytoplasm. The catalysed reaction is guanosine(527) in 16S rRNA + S-adenosyl-L-methionine = N(7)-methylguanosine(527) in 16S rRNA + S-adenosyl-L-homocysteine. Specifically methylates the N7 position of guanine in position 527 of 16S rRNA. In Hydrogenovibrio crunogenus (strain DSM 25203 / XCL-2) (Thiomicrospira crunogena), this protein is Ribosomal RNA small subunit methyltransferase G.